Here is a 433-residue protein sequence, read N- to C-terminus: KICSTOR complex protein ITFG2 (433 aa).

The FG-GAP 1; atypical repeat unit spans residues phenylalanine 19 to tyrosine 48. The residue at position 104 (serine 104) is a Phosphoserine. Residues asparagine 126–phenylalanine 155 form an FG-GAP 2; atypical repeat. A Phosphoserine modification is found at serine 220.

In terms of assembly, part of the KICSTOR complex composed of KPTN, ITFG2, KICS2 and SZT2. SZT2 probably serves as a link between the other three proteins in the KICSTOR complex and may mediate the direct interaction with the GATOR complex via GATOR1. The KICSTOR complex interacts directly with the GATOR1 complex and most probably indirectly with the GATOR2 complex in an amino acid-independent manner.

Its subcellular location is the lysosome membrane. Functionally, as part of the KICSTOR complex functions in the amino acid-sensing branch of the TORC1 signaling pathway. Recruits, in an amino acid-independent manner, the GATOR1 complex to the lysosomal membranes and allows its interaction with GATOR2 and the RAG GTPases. Functions upstream of the RAG GTPases and is required to negatively regulate mTORC1 signaling in absence of amino acids. In absence of the KICSTOR complex mTORC1 is constitutively localized to the lysosome and activated. The KICSTOR complex is also probably involved in the regulation of mTORC1 by glucose. This Pongo abelii (Sumatran orangutan) protein is KICSTOR complex protein ITFG2.